The chain runs to 247 residues: Sulfate transporter CysZ (247 aa).

A run of 5 helical transmembrane segments spans residues 29-49, 66-86, 141-160, 164-186, and 212-232; these read FVVL…FYLF, FLSW…LATF, LLYI…IPAL, VGPV…DYPF, and VLVS…PVAI.

This sequence belongs to the CysZ family.

The protein resides in the cell inner membrane. Its function is as follows. High affinity, high specificity proton-dependent sulfate transporter, which mediates sulfate uptake. Provides the sulfur source for the cysteine synthesis pathway. The protein is Sulfate transporter CysZ of Vibrio parahaemolyticus serotype O3:K6 (strain RIMD 2210633).